The sequence spans 428 residues: Adenylosuccinate synthetase, chloroplastic (428 aa).

Residues 17–23 (GDEGKGK) and 45–47 (GHT) each bind GTP. The active-site Proton acceptor is the aspartate 18. Residues aspartate 18 and glycine 45 each contribute to the Mg(2+) site. Residues 18-21 (DEGK), 43-46 (NAGH), threonine 135, arginine 149, asparagine 226, threonine 241, and arginine 305 contribute to the IMP site. Histidine 46 serves as the catalytic Proton donor. Residue 301 to 307 (TTTGRPR) participates in substrate binding. Residues arginine 307, 333–335 (KLD), and 416–418 (GVG) contribute to the GTP site.

The protein belongs to the adenylosuccinate synthetase family. As to quaternary structure, homodimer. Requires Mg(2+) as cofactor.

It is found in the plastid. Its subcellular location is the chloroplast. The catalysed reaction is IMP + L-aspartate + GTP = N(6)-(1,2-dicarboxyethyl)-AMP + GDP + phosphate + 2 H(+). It functions in the pathway purine metabolism; AMP biosynthesis via de novo pathway; AMP from IMP: step 1/2. Functionally, plays an important role in the de novo pathway and in the salvage pathway of purine nucleotide biosynthesis. Catalyzes the first committed step in the biosynthesis of AMP from IMP. This chain is Adenylosuccinate synthetase, chloroplastic, found in Ostreococcus lucimarinus (strain CCE9901).